The primary structure comprises 278 residues: Small ribosomal subunit protein uS3 (278 aa).

In terms of domain architecture, KH type-2 spans Ile-38–Lys-106. The disordered stretch occupies residues Ala-215 to Ser-278. The segment covering Ser-238 to Ser-278 has biased composition (low complexity).

The protein belongs to the universal ribosomal protein uS3 family. As to quaternary structure, part of the 30S ribosomal subunit. Forms a tight complex with proteins S10 and S14.

In terms of biological role, binds the lower part of the 30S subunit head. Binds mRNA in the 70S ribosome, positioning it for translation. This Mycolicibacterium gilvum (strain PYR-GCK) (Mycobacterium gilvum (strain PYR-GCK)) protein is Small ribosomal subunit protein uS3.